The following is a 53-amino-acid chain: Ribulose bisphosphate carboxylase large chain (53 aa).

The propeptide occupies 1–2 (MS). P3 carries the N-acetylproline modification. Position 14 is an N6,N6,N6-trimethyllysine (K14).

It belongs to the RuBisCO large chain family. Type I subfamily. As to quaternary structure, heterohexadecamer of 8 large chains and 8 small chains.

Its subcellular location is the plastid. It is found in the chloroplast. It catalyses the reaction 2 (2R)-3-phosphoglycerate + 2 H(+) = D-ribulose 1,5-bisphosphate + CO2 + H2O. It carries out the reaction D-ribulose 1,5-bisphosphate + O2 = 2-phosphoglycolate + (2R)-3-phosphoglycerate + 2 H(+). Its function is as follows. RuBisCO catalyzes two reactions: the carboxylation of D-ribulose 1,5-bisphosphate, the primary event in carbon dioxide fixation, as well as the oxidative fragmentation of the pentose substrate in the photorespiration process. Both reactions occur simultaneously and in competition at the same active site. This chain is Ribulose bisphosphate carboxylase large chain (rbcL), found in Malus domestica (Apple).